The following is a 209-amino-acid chain: Large ribosomal subunit protein uL3 (209 aa).

It belongs to the universal ribosomal protein uL3 family. In terms of assembly, part of the 50S ribosomal subunit. Forms a cluster with proteins L14 and L19.

In terms of biological role, one of the primary rRNA binding proteins, it binds directly near the 3'-end of the 23S rRNA, where it nucleates assembly of the 50S subunit. The protein is Large ribosomal subunit protein uL3 of Moorella thermoacetica (strain ATCC 39073 / JCM 9320).